We begin with the raw amino-acid sequence, 405 residues long: Probable succinyl-diaminopimelate desuccinylase (405 aa).

His72 serves as a coordination point for Zn(2+). Asp74 is an active-site residue. A Zn(2+)-binding site is contributed by Asp105. Glu139 functions as the Proton acceptor in the catalytic mechanism. Zn(2+) is bound by residues Glu140, Glu165, and His377.

Belongs to the peptidase M20A family. Requires Zn(2+) as cofactor. Co(2+) is required as a cofactor.

It catalyses the reaction N-succinyl-(2S,6S)-2,6-diaminopimelate + H2O = (2S,6S)-2,6-diaminopimelate + succinate. It participates in amino-acid biosynthesis; L-lysine biosynthesis via DAP pathway; LL-2,6-diaminopimelate from (S)-tetrahydrodipicolinate (succinylase route): step 3/3. In Staphylococcus epidermidis (strain ATCC 35984 / DSM 28319 / BCRC 17069 / CCUG 31568 / BM 3577 / RP62A), this protein is Probable succinyl-diaminopimelate desuccinylase (dapE).